The following is a 360-amino-acid chain: MAALSLKGVRKSYGGAQYVLHGIDVDIADGEFVVLVGPSGCGKSTLLRMIAGLETVTEGEIAIGGRVVNALEPKDRDIAMVFQNYALYPHMTVAQNMGYGLKIRGVERALIDARVQAAAQILELGPLLARRPRELSGGQRQRVAMGRAIVREPSVFLFDEPLSNLDAKLRVQMRLEIQRLHARLATTSVYVTHDQIEAMTLAQRVIVMNRGYAEQIGAPVDVYEKPATTFVASFIGSPAMNLLHGRLSEDGAAFDVADGPRLPVAGSAGAGRGIAPGREWILGVRPEHMTPQPGEAFATLAVDSCELLGADNLAHGRWGAHDVAVRLPHAMRPTRGETLPVALPARHLHFFDPATGKRAG.

Residues 4–235 form the ABC transporter domain; the sequence is LSLKGVRKSY…PATTFVASFI (232 aa). Residue 37-44 coordinates ATP; it reads GPSGCGKS.

The protein belongs to the ABC transporter superfamily. sn-glycerol-3-phosphate importer (TC 3.A.1.1.3) family. The complex is composed of two ATP-binding proteins (UgpC), two transmembrane proteins (UgpA and UgpE) and a solute-binding protein (UgpB).

The protein resides in the cell inner membrane. The catalysed reaction is sn-glycerol 3-phosphate(out) + ATP + H2O = sn-glycerol 3-phosphate(in) + ADP + phosphate + H(+). Part of the ABC transporter complex UgpBAEC involved in sn-glycerol-3-phosphate (G3P) import. Responsible for energy coupling to the transport system. In Burkholderia pseudomallei (strain 1710b), this protein is sn-glycerol-3-phosphate import ATP-binding protein UgpC.